Reading from the N-terminus, the 132-residue chain is Small ribosomal subunit protein uS8 (132 aa).

This sequence belongs to the universal ribosomal protein uS8 family. As to quaternary structure, part of the 30S ribosomal subunit. Contacts proteins S5 and S12.

One of the primary rRNA binding proteins, it binds directly to 16S rRNA central domain where it helps coordinate assembly of the platform of the 30S subunit. This is Small ribosomal subunit protein uS8 from Streptococcus thermophilus (strain CNRZ 1066).